The following is a 374-amino-acid chain: uncharacterized protein (374 aa).

Residues 1 to 21 (MSIISRVCIPCAVLLFAQLHA) form the signal peptide. Residues 22–102 (KELVHVSQLK…ASASAWTSLS (81 aa)) form the Fibronectin type-III domain.

This is an uncharacterized protein from Treponema pallidum (strain Nichols).